A 104-amino-acid polypeptide reads, in one-letter code: Ribonuclease P protein component 4 (104 aa).

Positions 57, 60, 83, and 86 each coordinate Zn(2+).

This sequence belongs to the eukaryotic/archaeal RNase P protein component 4 family. In terms of assembly, consists of a catalytic RNA component and at least 4-5 protein subunits. It depends on Zn(2+) as a cofactor.

It is found in the cytoplasm. It carries out the reaction Endonucleolytic cleavage of RNA, removing 5'-extranucleotides from tRNA precursor.. Part of ribonuclease P, a protein complex that generates mature tRNA molecules by cleaving their 5'-ends. This Saccharolobus islandicus (strain M.16.27) (Sulfolobus islandicus) protein is Ribonuclease P protein component 4.